The following is a 423-amino-acid chain: COP9 signalosome complex subunit 3 (423 aa).

The residue at position 2 (Ala2) is an N-acetylalanine. In terms of domain architecture, PCI spans 197–365 (NFERALYFYE…GMVSFHDNPE (169 aa)). A disordered region spans residues 402–423 (QFVQKSMGSQEDDSGNKPSSYS). Residues Ser407, Ser410, and Ser423 each carry the phosphoserine modification.

It belongs to the CSN3 family. Component of the CSN complex, composed of COPS1/GPS1, COPS2, COPS3, COPS4, COPS5, COPS6, COPS7 (COPS7A or COPS7B), COPS8 and COPS9. In the complex, it probably interacts directly with COPS1, COPS4, COPS8 and COPS9. Interacts with CK2 and PKD. Interacts with the translation initiation factor EIF3S6 and IKBKG. Interacts with ERCC6. In terms of tissue distribution, widely expressed.

The protein resides in the cytoplasm. Its subcellular location is the nucleus. Its function is as follows. Component of the COP9 signalosome complex (CSN), a complex involved in various cellular and developmental processes. The CSN complex is an essential regulator of the ubiquitin (Ubl) conjugation pathway by mediating the deneddylation of the cullin subunits of SCF-type E3 ligase complexes, leading to decrease the Ubl ligase activity of SCF-type complexes such as SCF, CSA or DDB2. The complex is also involved in phosphorylation of p53/TP53, c-jun/JUN, IkappaBalpha/NFKBIA, ITPK1 and IRF8/ICSBP, possibly via its association with CK2 and PKD kinases. CSN-dependent phosphorylation of TP53 and JUN promotes and protects degradation by the Ubl system, respectively. Essential to maintain the survival of epiblast cells and thus the development of the postimplantation embryo. In Mus musculus (Mouse), this protein is COP9 signalosome complex subunit 3 (Cops3).